The chain runs to 386 residues: LL-diaminopimelate aminotransferase (386 aa).

2 residues coordinate substrate: Tyr-13 and Gly-38. Residues Tyr-67, 101-102, Tyr-126, Asn-176, Tyr-207, and 235-237 each bind pyridoxal 5'-phosphate; these read SK and SLS. The substrate site is built by Lys-102, Tyr-126, and Asn-176. Lys-238 carries the N6-(pyridoxal phosphate)lysine modification. Arg-246 provides a ligand contact to pyridoxal 5'-phosphate. Position 364 (Arg-364) interacts with substrate.

This sequence belongs to the class-I pyridoxal-phosphate-dependent aminotransferase family. LL-diaminopimelate aminotransferase subfamily. Homodimer. The cofactor is pyridoxal 5'-phosphate.

It catalyses the reaction (2S,6S)-2,6-diaminopimelate + 2-oxoglutarate = (S)-2,3,4,5-tetrahydrodipicolinate + L-glutamate + H2O + H(+). The protein operates within amino-acid biosynthesis; L-lysine biosynthesis via DAP pathway; LL-2,6-diaminopimelate from (S)-tetrahydrodipicolinate (aminotransferase route): step 1/1. Involved in the synthesis of meso-diaminopimelate (m-DAP or DL-DAP), required for both lysine and peptidoglycan biosynthesis. Catalyzes the direct conversion of tetrahydrodipicolinate to LL-diaminopimelate. This is LL-diaminopimelate aminotransferase from Natranaerobius thermophilus (strain ATCC BAA-1301 / DSM 18059 / JW/NM-WN-LF).